A 142-amino-acid polypeptide reads, in one-letter code: ATP synthase epsilon chain (142 aa).

This sequence belongs to the ATPase epsilon chain family. In terms of assembly, F-type ATPases have 2 components, CF(1) - the catalytic core - and CF(0) - the membrane proton channel. CF(1) has five subunits: alpha(3), beta(3), gamma(1), delta(1), epsilon(1). CF(0) has three main subunits: a, b and c.

It localises to the cell inner membrane. Produces ATP from ADP in the presence of a proton gradient across the membrane. The polypeptide is ATP synthase epsilon chain (Shewanella sp. (strain ANA-3)).